Here is a 568-residue protein sequence, read N- to C-terminus: MTTQSEYDYIIIGAGSAGNTLAARLTEDAGVTVLLLEAGGPDYRLDFRTQMPAALAFPLQGRRYNWAYETEPEPHMDNRRMECGRGKGLGGSSLINGMCYIRGNAMDYDGWAKEPGLEDWSYLDCLPYFRKAETRDIGPNDYHGGEGPVSVTTPKAGNNPLFHAMVEAGVQAGFPRTDDLNGYQQEGFGPMDRTVTPKGRRASTARGYLDEAKKRDTLSIVTHALTDRILFEGKRAVGVAYLVGDSDTRIEVRARKEVLLCGGAIASPQILQRSGVGPAEVLNKLDIPVVHDLPGVGQNLQDHLEMYLQYACTQPVSLYPSLKWWNQPAIGAEWMFLGTGIGASNQFEAGGFIRSSEAFEWPNIQYHFLPVAINYNGTKGVQEHGFQAHVGSMRSPSRGRVHVKSKDPREYPSILFNYMASDQDWQEFRDGIRLTREIMQQPALDPYRGREISPGIDVQSDEALDQFVREHAETAYHPSCSCKMGTDEMAVVDGQGRVHGMQNLRVVDASIMPIITTGNLNAPTIMIAEKIADKIRGRQPLPRSTADYFVAGDKPARGKPLREISHQA.

8–37 (DYIIIGAGSAGNTLAARLTEDAGVTVLLLE) serves as a coordination point for FAD. H477 (proton acceptor) is an active-site residue.

This sequence belongs to the GMC oxidoreductase family. The cofactor is FAD.

It carries out the reaction choline + A = betaine aldehyde + AH2. It catalyses the reaction betaine aldehyde + NAD(+) + H2O = glycine betaine + NADH + 2 H(+). It participates in amine and polyamine biosynthesis; betaine biosynthesis via choline pathway; betaine aldehyde from choline (cytochrome c reductase route): step 1/1. In terms of biological role, involved in the biosynthesis of the osmoprotectant glycine betaine. Catalyzes the oxidation of choline to betaine aldehyde and betaine aldehyde to glycine betaine at the same rate. In Pseudomonas syringae pv. tomato (strain ATCC BAA-871 / DC3000), this protein is Oxygen-dependent choline dehydrogenase.